Here is a 394-residue protein sequence, read N- to C-terminus: Elongation factor Tu (394 aa).

The region spanning 10-204 is the tr-type G domain; the sequence is KPHVNVGTIG…ALDNYIPEPE (195 aa). Positions 19–26 are G1; that stretch reads GHVDHGKT. 19–26 is a GTP binding site; sequence GHVDHGKT. Thr26 lines the Mg(2+) pocket. Positions 60–64 are G2; that stretch reads GITIS. A G3 region spans residues 81–84; sequence DCPG. Residues 81-85 and 136-139 contribute to the GTP site; these read DCPGH and NKCD. Residues 136 to 139 form a G4 region; it reads NKCD. A G5 region spans residues 174–176; the sequence is SAL.

This sequence belongs to the TRAFAC class translation factor GTPase superfamily. Classic translation factor GTPase family. EF-Tu/EF-1A subfamily. As to quaternary structure, monomer.

It localises to the cytoplasm. The catalysed reaction is GTP + H2O = GDP + phosphate + H(+). Functionally, GTP hydrolase that promotes the GTP-dependent binding of aminoacyl-tRNA to the A-site of ribosomes during protein biosynthesis. This Idiomarina loihiensis (strain ATCC BAA-735 / DSM 15497 / L2-TR) protein is Elongation factor Tu.